We begin with the raw amino-acid sequence, 239 residues long: Cysteine-rich venom protein kaouthin-1 (239 aa).

Residues 1–18 form the signal peptide; it reads MIAFSLLCLAAVLRQSFG. Positions 37–165 constitute an SCP domain; that stretch reads VDLHNSLRRR…AWSYFYVCQY (129 aa). 8 disulfides stabilise this stretch: cysteine 74–cysteine 152, cysteine 91–cysteine 166, cysteine 147–cysteine 163, cysteine 185–cysteine 192, cysteine 188–cysteine 197, cysteine 201–cysteine 234, cysteine 210–cysteine 228, and cysteine 219–cysteine 232. The ShKT domain occupies 201–234; it reads CTIYNKLTNCDSLLKQGSCQDDWIKSNCPASCFC.

The protein belongs to the CRISP family. Expressed by the venom gland.

It is found in the secreted. In terms of biological role, inhibits calcium-activated potassium channels (KCa), voltage-gated potassium channel (Kv), and the calcium release channel/ryanodine receptor (RyR). The protein is Cysteine-rich venom protein kaouthin-1 of Naja kaouthia (Monocled cobra).